The primary structure comprises 1082 residues: Inner tegument protein (1082 aa).

Positions 604–1082 are interaction with large tegument protein; the sequence is DHIDCLFNIS…QQDLIAPLTF (479 aa).

It belongs to the herpesviridae inner tegument protein family. Interacts (via C-terminus) with the large tegument protein/LTP (via N-terminus).

It is found in the virion tegument. Its subcellular location is the host cytoplasm. The protein localises to the host nucleus. The protein resides in the host Golgi apparatus. It localises to the host trans-Golgi network. Its function is as follows. Plays an essential role in cytoplasmic secondary envelopment during viral egress. Interacts with the capsid via the large tegument protein/LTP and participates in its transport to the host trans-Golgi network (TGN) where secondary envelopment occurs. Modulates tegumentation and capsid accumulation at the viral assembly complex. The polypeptide is Inner tegument protein (U30) (Homo sapiens (Human)).